The following is a 396-amino-acid chain: Probable sugar efflux transporter (396 aa).

12 helical membrane passes run Val-15 to Leu-35, Val-50 to Leu-70, Leu-81 to Phe-101, Val-103 to Ala-123, Ala-136 to Leu-156, Phe-170 to Leu-190, Pro-209 to Tyr-229, Phe-246 to Gly-266, Ala-275 to Ala-295, Ile-299 to Met-319, Val-333 to Gly-353, and Met-364 to Phe-384.

This sequence belongs to the major facilitator superfamily. SotB (TC 2.A.1.2) family.

Its subcellular location is the cell inner membrane. Its function is as follows. Involved in the efflux of sugars. The physiological role may be the reduction of the intracellular concentration of toxic sugars or sugar metabolites. This is Probable sugar efflux transporter from Escherichia coli O139:H28 (strain E24377A / ETEC).